Consider the following 982-residue polypeptide: Chromosome partition protein Smc (982 aa).

33–40 (PNGSGKSN) contacts ATP. 3 coiled-coil regions span residues 171–231 (RYTK…ELAV), 280–310 (SADM…VIID), and 337–377 (QTQL…QIEK). The 120-residue stretch at 416–535 (TGILNTLGTF…AKDLNSAINL (120 aa)) folds into the SMC hinge domain. Coiled-coil stretches lie at residues 575 to 718 (SASL…SARE) and 753 to 822 (VKLS…IASN).

It belongs to the SMC family. Homodimer.

It localises to the cytoplasm. Functionally, required for chromosome condensation and partitioning. The sequence is that of Chromosome partition protein Smc from Mycoplasma genitalium (strain ATCC 33530 / DSM 19775 / NCTC 10195 / G37) (Mycoplasmoides genitalium).